Consider the following 359-residue polypeptide: Fructose-bisphosphate aldolase, cytoplasmic isozyme (359 aa).

Arg-52 and Lys-142 together coordinate substrate. Glu-184 serves as the catalytic Proton acceptor. The active-site Schiff-base intermediate with dihydroxyacetone-P is the Lys-226.

It belongs to the class I fructose-bisphosphate aldolase family.

It localises to the cytoplasm. The catalysed reaction is beta-D-fructose 1,6-bisphosphate = D-glyceraldehyde 3-phosphate + dihydroxyacetone phosphate. The protein operates within carbohydrate degradation; glycolysis; D-glyceraldehyde 3-phosphate and glycerone phosphate from D-glucose: step 4/4. In Cicer arietinum (Chickpea), this protein is Fructose-bisphosphate aldolase, cytoplasmic isozyme (ALDC).